The primary structure comprises 167 residues: Mediator of RNA polymerase II transcription subunit 10 (167 aa).

The segment at 54 to 92 is disordered; that stretch reads STHTKPHPPPPPPPQPTDPTTAAAPALRDNPDPPLSSIQ. A compositionally biased stretch (pro residues) spans 60–70; sequence HPPPPPPPQPT.

The protein belongs to the Mediator complex subunit 10 family. As to quaternary structure, component of the Mediator complex.

The protein resides in the nucleus. Its function is as follows. Component of the Mediator complex, a coactivator involved in the regulated transcription of nearly all RNA polymerase II-dependent genes. Mediator functions as a bridge to convey information from gene-specific regulatory proteins to the basal RNA polymerase II transcription machinery. Mediator is recruited to promoters by direct interactions with regulatory proteins and serves as a scaffold for the assembly of a functional preinitiation complex with RNA polymerase II and the general transcription factors. The protein is Mediator of RNA polymerase II transcription subunit 10 (nut2) of Aspergillus clavatus (strain ATCC 1007 / CBS 513.65 / DSM 816 / NCTC 3887 / NRRL 1 / QM 1276 / 107).